We begin with the raw amino-acid sequence, 215 residues long: Large ribosomal subunit protein uL4c (215 aa).

The span at 48–57 (SQRQGTISTK) shows a compositional bias: polar residues. The disordered stretch occupies residues 48-85 (SQRQGTISTKTRSEVRGGGRKPWRQKGTGRARAGSSRS). Positions 65–76 (GGRKPWRQKGTG) are enriched in basic residues.

The protein belongs to the universal ribosomal protein uL4 family. As to quaternary structure, part of the 50S ribosomal subunit.

It localises to the plastid. Its subcellular location is the chloroplast. Functionally, probably binds the 23S rRNA. The chain is Large ribosomal subunit protein uL4c (rpl4) from Trieres chinensis (Marine centric diatom).